Reading from the N-terminus, the 193-residue chain is Imidazoleglycerol-phosphate dehydratase (193 aa).

Belongs to the imidazoleglycerol-phosphate dehydratase family.

The protein resides in the cytoplasm. It catalyses the reaction D-erythro-1-(imidazol-4-yl)glycerol 3-phosphate = 3-(imidazol-4-yl)-2-oxopropyl phosphate + H2O. It participates in amino-acid biosynthesis; L-histidine biosynthesis; L-histidine from 5-phospho-alpha-D-ribose 1-diphosphate: step 6/9. In Sulfolobus acidocaldarius (strain ATCC 33909 / DSM 639 / JCM 8929 / NBRC 15157 / NCIMB 11770), this protein is Imidazoleglycerol-phosphate dehydratase.